The following is a 539-amino-acid chain: Phosphoenolpyruvate carboxykinase (ATP) (539 aa).

Substrate-binding residues include Arg64, Tyr206, and Lys212. ATP is bound by residues Lys212, His231, and 247-255 (GLSGTGKTT). Mn(2+) contacts are provided by Lys212 and His231. Asp268 serves as a coordination point for Mn(2+). Residues Glu296, Arg332, 448–449 (RI), and Thr454 contribute to the ATP site. A substrate-binding site is contributed by Arg332.

This sequence belongs to the phosphoenolpyruvate carboxykinase (ATP) family. Monomer. The cofactor is Mn(2+).

The protein localises to the cytoplasm. It carries out the reaction oxaloacetate + ATP = phosphoenolpyruvate + ADP + CO2. It participates in carbohydrate biosynthesis; gluconeogenesis. Its function is as follows. Involved in the gluconeogenesis. Catalyzes the conversion of oxaloacetate (OAA) to phosphoenolpyruvate (PEP) through direct phosphoryl transfer between the nucleoside triphosphate and OAA. In Yersinia pestis bv. Antiqua (strain Antiqua), this protein is Phosphoenolpyruvate carboxykinase (ATP).